Reading from the N-terminus, the 202-residue chain is Securin-2 (202 aa).

The tract at residues 60–105 (TRKALGTVNRATEKSVKTNGPRKQKQPSFSAKKMTEKTVKTKSSVP) is disordered. Residues 61–64 (RKAL) carry the D-box motif. The short motif at 163-173 (PPSPVKMPSPP) is the SH3-binding element.

The protein belongs to the securin family. As to expression, expressed at low levels in the pituitary, liver, spleen, prostate, testis, ovary, small intestine and colon. Also expressed in various pituitary, testicular, liver and ovarian tumors.

Its subcellular location is the cytoplasm. The protein localises to the nucleus. The polypeptide is Securin-2 (PTTG2) (Homo sapiens (Human)).